We begin with the raw amino-acid sequence, 284 residues long: 4-hydroxybenzoate octaprenyltransferase (284 aa).

7 consecutive transmembrane segments (helical) span residues 13 to 32 (FNRPIGSFLLMWPTLWALWL), 90 to 110 (ALMLFCALSILSFILVLFTDL), 112 to 132 (TILLSFVGLGLAALYPFMKRY), 134 to 154 (HLPQLFLGLAFSWAIPMAYSA), 164 to 184 (LWMLFVANCFWTIAYDTYYAM), 200 to 220 (ILFGQYDLFVIICLQGLTLSL), and 224 to 244 (IGLLAGLHWLYFVSLIVCVGL).

This sequence belongs to the UbiA prenyltransferase family. Mg(2+) serves as cofactor.

The protein resides in the cell inner membrane. The enzyme catalyses all-trans-octaprenyl diphosphate + 4-hydroxybenzoate = 4-hydroxy-3-(all-trans-octaprenyl)benzoate + diphosphate. It participates in cofactor biosynthesis; ubiquinone biosynthesis. Catalyzes the prenylation of para-hydroxybenzoate (PHB) with an all-trans polyprenyl group. Mediates the second step in the final reaction sequence of ubiquinone-8 (UQ-8) biosynthesis, which is the condensation of the polyisoprenoid side chain with PHB, generating the first membrane-bound Q intermediate 3-octaprenyl-4-hydroxybenzoate. This Marinomonas sp. (strain MWYL1) protein is 4-hydroxybenzoate octaprenyltransferase.